The sequence spans 94 residues: MRIKPLGNRVVIKKLEAEEKTKSGIVLTGSAKEVPQEAEVVAVGPGSIVDGTKIEMEVKVGDKVLYSKYSGTEVKLDGEEYMILKQDDILAIVE.

The protein belongs to the GroES chaperonin family. As to quaternary structure, heptamer of 7 subunits arranged in a ring. Interacts with the chaperonin GroEL.

The protein localises to the cytoplasm. In terms of biological role, together with the chaperonin GroEL, plays an essential role in assisting protein folding. The GroEL-GroES system forms a nano-cage that allows encapsulation of the non-native substrate proteins and provides a physical environment optimized to promote and accelerate protein folding. GroES binds to the apical surface of the GroEL ring, thereby capping the opening of the GroEL channel. The chain is Co-chaperonin GroES from Clostridium botulinum (strain Eklund 17B / Type B).